A 553-amino-acid polypeptide reads, in one-letter code: Coiled-coil domain-containing protein 22 homolog (553 aa).

The interval 236 to 264 (DSEEPAPPPISTVKPDASAEEEASPIQEL) is disordered. Coiled coils occupy residues 261-286 (IQEL…KAHA), 314-407 (ERTS…QSLA), and 498-549 (NVTK…VEQP).

The protein belongs to the CCDC22 family.

The polypeptide is Coiled-coil domain-containing protein 22 homolog (Drosophila erecta (Fruit fly)).